A 188-amino-acid polypeptide reads, in one-letter code: dCTP deaminase (188 aa).

Residues 111–116, 135–137, Q156, Y170, K179, and Q180 contribute to the dCTP site; these read KSTYAR and TLE. The active-site Proton donor/acceptor is the E137.

It belongs to the dCTP deaminase family. In terms of assembly, homotrimer.

It catalyses the reaction dCTP + H2O + H(+) = dUTP + NH4(+). It participates in pyrimidine metabolism; dUMP biosynthesis; dUMP from dCTP (dUTP route): step 1/2. Its function is as follows. Catalyzes the deamination of dCTP to dUTP. In Rickettsia typhi (strain ATCC VR-144 / Wilmington), this protein is dCTP deaminase.